The primary structure comprises 752 residues: Granule-bound starch synthase 2, chloroplastic/amyloplastic (752 aa).

Residues 1-57 constitute a chloroplast transit peptide; that stretch reads MMLSLGSDATVLPFHAKNLKFTPKLSTLNGDLAFSKGLGVGRLNCGSVRLNHKQHVR. Disordered regions lie at residues 116–146 and 224–253; these read LEGN…SGSA and FENF…EKPP. Lys275 lines the ADP-alpha-D-glucose pocket.

The protein belongs to the glycosyltransferase 1 family. Bacterial/plant glycogen synthase subfamily. Widely expressed.

The protein resides in the plastid. The protein localises to the chloroplast. It is found in the amyloplast. It carries out the reaction [(1-&gt;4)-alpha-D-glucosyl](n) + ADP-alpha-D-glucose = [(1-&gt;4)-alpha-D-glucosyl](n+1) + ADP + H(+). Its pathway is glycan biosynthesis; starch biosynthesis. In Pisum sativum (Garden pea), this protein is Granule-bound starch synthase 2, chloroplastic/amyloplastic.